Reading from the N-terminus, the 895-residue chain is Probable methyltransferase PMT27 (895 aa).

The Cytoplasmic segment spans residues 1–16 (MAFGRGRGNKRTSTSS). A helical; Signal-anchor for type II membrane protein transmembrane segment spans residues 17–37 (YASTITMVIFVALCVFGVWML). Topologically, residues 38 to 895 (SSNSVIPPQI…KGFWRPETSQ (858 aa)) are lumenal. A compositionally biased stretch (polar residues) spans 43-52 (IPPQITQGST). Residues 43 to 362 (IPPQITQGST…QRQTSESNTV (320 aa)) are disordered. The span at 90–114 (NPGKLPDDAVKSEDEQRKSAKEKSE) shows a compositional bias: basic and acidic residues. The span at 115–127 (TTSSKTQTQETQQ) shows a compositional bias: low complexity. Basic and acidic residues predominate over residues 129–143 (NDDKISEEKEKDNGK). Asn145 is a glycosylation site (N-linked (GlcNAc...) asparagine). A compositionally biased stretch (basic and acidic residues) spans 154–174 (GQMKKVVKEFEKEQKQQRDED). Residues 176 to 191 (GTQPKGTQGQEQGQGK) show a composition bias toward low complexity. Polar residues-rich tracts occupy residues 199 to 232 (GNKQ…GETS) and 243 to 256 (PEEQ…TGQQ). Positions 257 to 320 (NEEKTTASEE…RKDEKKHEQG (64 aa)) are enriched in basic and acidic residues. The span at 337–346 (SQKSWKSQAT) shows a compositional bias: polar residues. Asn375 and Asn709 each carry an N-linked (GlcNAc...) asparagine glycan.

The protein belongs to the methyltransferase superfamily.

It localises to the endoplasmic reticulum membrane. This chain is Probable methyltransferase PMT27, found in Arabidopsis thaliana (Mouse-ear cress).